We begin with the raw amino-acid sequence, 496 residues long: 1-aminocyclopropane-1-carboxylate synthase 2 (496 aa).

Substrate is bound by residues Glu55 and Tyr93. Position 279 is an N6-(pyridoxal phosphate)lysine (Lys279). 3 positions are modified to phosphoserine: Ser483, Ser488, and Ser491.

It belongs to the class-I pyridoxal-phosphate-dependent aminotransferase family. As to quaternary structure, homodimer and heterodimer. In vivo, the relevance of heterodimerization with other ACS enzymes is however unsure. Interacts with GRF3. Requires pyridoxal 5'-phosphate as cofactor. In terms of processing, phosphorylated on serine residue by MAP kinase (MPK6). May be processed at its C-terminus. In terms of tissue distribution, high in developing leaves and in flowers. Expressed in roots and siliques.

The enzyme catalyses S-adenosyl-L-methionine = 1-aminocyclopropane-1-carboxylate + S-methyl-5'-thioadenosine + H(+). It participates in alkene biosynthesis; ethylene biosynthesis via S-adenosyl-L-methionine; ethylene from S-adenosyl-L-methionine: step 1/2. Functionally, 1-aminocyclopropane-1-carboxylate synthase (ACS) enzymes catalyze the conversion of S-adenosyl-L-methionine (SAM) into 1-aminocyclopropane-1-carboxylate (ACC), a direct precursor of ethylene. In Arabidopsis thaliana (Mouse-ear cress), this protein is 1-aminocyclopropane-1-carboxylate synthase 2 (ACS2).